A 248-amino-acid chain; its full sequence is Small ribosomal subunit protein uS2 (248 aa).

Belongs to the universal ribosomal protein uS2 family.

The protein is Small ribosomal subunit protein uS2 of Herminiimonas arsenicoxydans.